Consider the following 307-residue polypeptide: Cyclin-dependent kinase 5 activator 1 (307 aa).

Residue glycine 2 is the site of N-myristoyl glycine attachment. Serine 8 carries the post-translational modification Phosphoserine; by CDK5. The disordered stretch occupies residues 97–135 (TFAQPPPAQPPAPPASQLSGSQTGVSSSVKKAPHPAVSS). A compositionally biased stretch (pro residues) spans 100–110 (QPPPAQPPAPP). Polar residues predominate over residues 112-125 (SQLSGSQTGVSSSV). Position 138 is a phosphothreonine; by CDK5 (threonine 138).

This sequence belongs to the cyclin-dependent kinase 5 activator family. Heterodimer composed of a catalytic subunit CDK5 and a regulatory subunit CDK5R1 (p25) and macromolecular complex composed of at least CDK5, CDK5R1 (p35) and CDK5RAP1 or CDK5RAP2 or CDK5RAP3. Only the heterodimer shows kinase activity. Interacts with EPHA4 and NGEF; may mediate the activation of NGEF by EPHA4. Interacts with RASGRF2. The complex p35/CDK5 interacts with CLOCK. The p35 form is proteolytically cleaved by calpain, giving rise to the p25 form. P35 has a 5 to 10 fold shorter half-life compared to p25. The conversion results in deregulation of the CDK5 kinase: p25/CDK5 kinase displays an increased and altered tau phosphorylation in comparison to the p35/CDK5 kinase in vivo. Post-translationally, myristoylated. A proper myristoylation signal is essential for the proper distribution of p35. In terms of processing, phosphorylation at Ser-8 and Thr-138 by CDK5 prevents calpain-mediated proteolysis. Ubiquitinated, leading to its degradation: degradation of p35 by proteasome results in down-regulation of CDK5 activity. During this process, CDK5 phosphorylates p35 and induces its ubiquitination and subsequent degradation. Ubiquitinated by the CRL2(FEM1B) complex, which recognizes the -Gly-Leu-Asp-Arg C-degron at the C-terminus, leading to its degradation. As to expression, brain and neuron specific.

It is found in the cell membrane. It localises to the cell projection. The protein resides in the neuron projection. Its subcellular location is the nucleus. The protein localises to the cytoplasm. It is found in the perinuclear region. It localises to the perikaryon. Its function is as follows. p35 is a neuron specific activator of CDK5. The complex p35/CDK5 is required for neurite outgrowth and cortical lamination. Involved in dendritic spine morphogenesis by mediating the EFNA1-EPHA4 signaling. Activator of TPKII. The complex p35/CDK5 participates in the regulation of the circadian clock by modulating the function of CLOCK protein: phosphorylates CLOCK at 'Thr-451' and 'Thr-461' and regulates the transcriptional activity of the CLOCK-BMAL1 heterodimer in association with altered stability and subcellular distribution. In Bos taurus (Bovine), this protein is Cyclin-dependent kinase 5 activator 1 (CDK5R1).